Consider the following 391-residue polypeptide: Pyruvate dehydrogenase E1 component subunit beta-3, chloroplastic (391 aa).

A chloroplast-targeting transit peptide spans 1-35; sequence MATAAAASLQYALHGAASASAKPRSAAPGRSVRVV. Glu-127 contacts thiamine diphosphate. Residues Ile-180, Ala-228, Ile-229, and Asn-233 each contribute to the K(+) site.

Tetramer of 2 alpha and 2 beta subunits. Thiamine diphosphate is required as a cofactor.

Its subcellular location is the plastid. It is found in the chloroplast. The catalysed reaction is N(6)-[(R)-lipoyl]-L-lysyl-[protein] + pyruvate + H(+) = N(6)-[(R)-S(8)-acetyldihydrolipoyl]-L-lysyl-[protein] + CO2. In terms of biological role, the pyruvate dehydrogenase complex catalyzes the overall conversion of pyruvate to acetyl-CoA and CO(2). It contains multiple copies of three enzymatic components: pyruvate dehydrogenase (E1), dihydrolipoamide acetyltransferase (E2) and lipoamide dehydrogenase (E3). The protein is Pyruvate dehydrogenase E1 component subunit beta-3, chloroplastic of Oryza sativa subsp. japonica (Rice).